The primary structure comprises 168 residues: Thiol peroxidase (168 aa).

Residues Pro-19–Ala-168 enclose the Thioredoxin domain. Residue Cys-61 is the Cysteine sulfenic acid (-SOH) intermediate of the active site. Cys-61 and Cys-95 are disulfide-bonded.

It belongs to the peroxiredoxin family. Tpx subfamily. Homodimer.

The enzyme catalyses a hydroperoxide + [thioredoxin]-dithiol = an alcohol + [thioredoxin]-disulfide + H2O. Functionally, thiol-specific peroxidase that catalyzes the reduction of hydrogen peroxide and organic hydroperoxides to water and alcohols, respectively. Plays a role in cell protection against oxidative stress by detoxifying peroxides. In Salmonella typhimurium (strain LT2 / SGSC1412 / ATCC 700720), this protein is Thiol peroxidase.